The sequence spans 483 residues: Cobyric acid synthase (483 aa).

In terms of domain architecture, GATase cobBQ-type spans 248–435; sequence VLKVVVPVLP…LHGLFETAAA (188 aa). Cysteine 329 acts as the Nucleophile in catalysis. Histidine 427 is an active-site residue.

This sequence belongs to the CobB/CobQ family. CobQ subfamily.

The protein operates within cofactor biosynthesis; adenosylcobalamin biosynthesis. Catalyzes amidations at positions B, D, E, and G on adenosylcobyrinic A,C-diamide. NH(2) groups are provided by glutamine, and one molecule of ATP is hydrogenolyzed for each amidation. This is Cobyric acid synthase from Pseudomonas fluorescens (strain SBW25).